Here is a 142-residue protein sequence, read N- to C-terminus: Type II secretion system core protein G (142 aa).

Positions 1–8 are cleaved as a propeptide — leader sequence; sequence MQRRQQSG. At phenylalanine 9 the chain carries N-methylphenylalanine. A helical membrane pass occupies residues 9–29; sequence FTLIEIMVVVVILGILAALVV. Residues 121–142 form a disordered region; sequence SLGADGKEGGSDNDADIGNWDN.

This sequence belongs to the GSP G family. Type II secretion system is composed of four main components: the outer membrane complex, the inner membrane complex, the cytoplasmic secretion ATPase and the periplasm-spanning pseudopilus. Forms homomultimers. Interacts with pseudopilin tip ternary complex made of XcpX, XcpU, XcpV and XcpW. Interacts with PilA. Cleaved by the prepilin peptidase. Post-translationally, methylated by prepilin peptidase at the amino group of the N-terminal phenylalanine once the leader sequence is cleaved.

It is found in the cell inner membrane. Its function is as follows. Core component of the type II secretion system required for the energy-dependent secretion of extracellular factors such as proteases and toxins from the periplasm. Pseudopilin (pilin-like) protein that polymerizes to form the pseudopilus. Further polymerization triggers pseudopilus growth. Type II pseudopilus confers increased bacterial adhesive capabilities. The sequence is that of Type II secretion system core protein G (xcpT) from Pseudomonas aeruginosa (strain ATCC 15692 / DSM 22644 / CIP 104116 / JCM 14847 / LMG 12228 / 1C / PRS 101 / PAO1).